Reading from the N-terminus, the 350-residue chain is Histidinol-phosphate aminotransferase 1 (350 aa).

N6-(pyridoxal phosphate)lysine is present on Lys-210.

Belongs to the class-II pyridoxal-phosphate-dependent aminotransferase family. Histidinol-phosphate aminotransferase subfamily. Homodimer. Pyridoxal 5'-phosphate is required as a cofactor.

The catalysed reaction is L-histidinol phosphate + 2-oxoglutarate = 3-(imidazol-4-yl)-2-oxopropyl phosphate + L-glutamate. It participates in amino-acid biosynthesis; L-histidine biosynthesis; L-histidine from 5-phospho-alpha-D-ribose 1-diphosphate: step 7/9. This chain is Histidinol-phosphate aminotransferase 1, found in Pseudomonas fluorescens (strain ATCC BAA-477 / NRRL B-23932 / Pf-5).